Consider the following 658-residue polypeptide: MSDDMSMGLPSSAGEHGVLRSMQEVAMSSQEASKMLRTYNIAWWGNNYYDVNELGHISVCPDPDVPEARVDLAQLVKTREAQGQRLPALFCFPQILQHRLRSINAAFKRARESYGYNGDYFLVYPIKVNQHRRVIESLIHSGEPLGLEAGSKAELMAVLAHAGMTRSVIVCNGYKDREYIRLALIGEKMGHKVYLVIEKMSEIAIVLDEAERLNVVPRLGVRARLASQGSGKWQSSGGEKSKFGLAATQVLQLVETLREAGRLDSLQLLHFHLGSQMANIRDIATGVRESARFYVELHKLGVNIQCFDVGGGLGVDYEGTRSQSDCSVNYGLNEYANNIIWAIGDACEENGLPHPTVITESGRAVTAHHTVLVSNIIGVERNEYTVPTAPAEDAPRALQSMWETWQEMHEPGTRRSLREWLHDSQMDLHDIHIGYSSGTFSLQERAWAEQLYLSMCHEVQKQLDPQNRAHRPIIDELQERMADKMYVNFSLFQSMPDAWGIDQLFPVLPLEGLDQVPERRAVLLDITCDSDGAIDHYIDGDGIATTMPMPEYDPENPPMLGFFMVGAYQEILGNMHNLFGDTEAVDVFVFPDGSVEVELSDEGDTVADMLQYVQLDPKTLLTQFRDQVKKTDLDAELQQQFLEEFEAGLYGYTYLEDE.

N6-(pyridoxal phosphate)lysine is present on lysine 127. Residue 307-317 (FDVGGGLGVDY) coordinates substrate.

This sequence belongs to the Orn/Lys/Arg decarboxylase class-II family. SpeA subfamily. In terms of assembly, homotetramer. The cofactor is Mg(2+). It depends on pyridoxal 5'-phosphate as a cofactor.

The protein localises to the periplasm. It carries out the reaction L-arginine + H(+) = agmatine + CO2. It participates in amine and polyamine biosynthesis; agmatine biosynthesis; agmatine from L-arginine: step 1/1. Catalyzes the biosynthesis of agmatine from arginine. In Escherichia coli O157:H7, this protein is Biosynthetic arginine decarboxylase (speA).